A 416-amino-acid chain; its full sequence is Subtilisin-like protease 12 (416 aa).

The N-terminal stretch at 1-19 is a signal peptide; sequence MSILKMMLIYFAIFWVVNA. Residues 20 to 116 constitute a propeptide that is removed on maturation; the sequence is AQLLDIDSQG…VEPNKEMQVA (97 aa). An Inhibitor I9 domain is found at 35 to 115; sequence YIVVMKDRVS…FVEPNKEMQV (81 aa). N-linked (GlcNAc...) asparagine glycosylation is found at Asn123, Asn136, and Asn150. Residues 125 to 416 form the Peptidase S8 domain; that stretch reads TWGLSRISHK…NKLLYNGSGA (292 aa). Active-site charge relay system residues include Asp157 and His188. N-linked (GlcNAc...) asparagine glycans are attached at residues Asn249, Asn305, Asn334, and Asn353. The active-site Charge relay system is Ser362. N-linked (GlcNAc...) asparagine glycans are attached at residues Asn404 and Asn412.

Belongs to the peptidase S8 family.

The protein resides in the secreted. In terms of biological role, secreted subtilisin-like serine protease with keratinolytic activity that contributes to pathogenicity. The protein is Subtilisin-like protease 12 (SUB12) of Arthroderma benhamiae (strain ATCC MYA-4681 / CBS 112371) (Trichophyton mentagrophytes).